Consider the following 303-residue polypeptide: Acetylglutamate kinase (303 aa).

Residues 76 to 77 (GG), arginine 98, and asparagine 199 each bind substrate.

This sequence belongs to the acetylglutamate kinase family. ArgB subfamily.

The protein resides in the cytoplasm. The enzyme catalyses N-acetyl-L-glutamate + ATP = N-acetyl-L-glutamyl 5-phosphate + ADP. The protein operates within amino-acid biosynthesis; L-arginine biosynthesis; N(2)-acetyl-L-ornithine from L-glutamate: step 2/4. Its function is as follows. Catalyzes the ATP-dependent phosphorylation of N-acetyl-L-glutamate. In Clavibacter michiganensis subsp. michiganensis (strain NCPPB 382), this protein is Acetylglutamate kinase.